The chain runs to 99 residues: NADH-quinone oxidoreductase subunit K (99 aa).

3 helical membrane passes run 3–23 (PDNY…GVLL), 28–48 (IVMF…FVTF), and 59–79 (VVAF…LAII).

The protein belongs to the complex I subunit 4L family. In terms of assembly, NDH-1 is composed of 14 different subunits. Subunits NuoA, H, J, K, L, M, N constitute the membrane sector of the complex.

It localises to the cell membrane. The catalysed reaction is a quinone + NADH + 5 H(+)(in) = a quinol + NAD(+) + 4 H(+)(out). Its function is as follows. NDH-1 shuttles electrons from NADH, via FMN and iron-sulfur (Fe-S) centers, to quinones in the respiratory chain. The immediate electron acceptor for the enzyme in this species is believed to be a menaquinone. Couples the redox reaction to proton translocation (for every two electrons transferred, four hydrogen ions are translocated across the cytoplasmic membrane), and thus conserves the redox energy in a proton gradient. This is NADH-quinone oxidoreductase subunit K from Mycolicibacterium gilvum (strain PYR-GCK) (Mycobacterium gilvum (strain PYR-GCK)).